Here is an 82-residue protein sequence, read N- to C-terminus: Chaperone protein DnaJ 1 (82 aa).

The tract at residues 1–33 (YHLGGPPVTLKLPPGTPAGRTMRARGKGAVRKD) is disordered.

This sequence belongs to the DnaJ family. As to quaternary structure, homodimer. Requires Zn(2+) as cofactor.

Its subcellular location is the cytoplasm. In terms of biological role, participates actively in the response to hyperosmotic and heat shock by preventing the aggregation of stress-denatured proteins and by disaggregating proteins, also in an autonomous, DnaK-independent fashion. Unfolded proteins bind initially to DnaJ; upon interaction with the DnaJ-bound protein, DnaK hydrolyzes its bound ATP, resulting in the formation of a stable complex. GrpE releases ADP from DnaK; ATP binding to DnaK triggers the release of the substrate protein, thus completing the reaction cycle. Several rounds of ATP-dependent interactions between DnaJ, DnaK and GrpE are required for fully efficient folding. Also involved, together with DnaK and GrpE, in the DNA replication of plasmids through activation of initiation proteins. This Streptomyces albus G protein is Chaperone protein DnaJ 1 (dnaJ1).